The primary structure comprises 647 residues: Threonine--tRNA ligase (647 aa).

The TGS domain occupies 1–61 (MIKITFPDGA…EEDGSIEIVT (61 aa)). The tract at residues 240–538 (DHRKLGKELD…LIETYKGAFP (299 aa)) is catalytic. Zn(2+) contacts are provided by cysteine 334, histidine 385, and histidine 515.

Belongs to the class-II aminoacyl-tRNA synthetase family. In terms of assembly, homodimer. Requires Zn(2+) as cofactor.

It is found in the cytoplasm. It catalyses the reaction tRNA(Thr) + L-threonine + ATP = L-threonyl-tRNA(Thr) + AMP + diphosphate + H(+). Catalyzes the attachment of threonine to tRNA(Thr) in a two-step reaction: L-threonine is first activated by ATP to form Thr-AMP and then transferred to the acceptor end of tRNA(Thr). Also edits incorrectly charged L-seryl-tRNA(Thr). The chain is Threonine--tRNA ligase from Streptococcus pyogenes serotype M4 (strain MGAS10750).